The chain runs to 242 residues: Adapter protein MecA (242 aa).

The protein belongs to the MecA family. In terms of assembly, homodimer.

Enables the recognition and targeting of unfolded and aggregated proteins to the ClpC protease or to other proteins involved in proteolysis. The sequence is that of Adapter protein MecA from Streptococcus gordonii (strain Challis / ATCC 35105 / BCRC 15272 / CH1 / DL1 / V288).